The chain runs to 276 residues: Diaminopimelate epimerase (276 aa).

Residues N13, Q46, and N66 each contribute to the substrate site. The active-site Proton donor is C75. Residues 76–77, N159, N192, and 210–211 contribute to the substrate site; these read GN and ER. The active-site Proton acceptor is the C219. Substrate is bound at residue 220 to 221; sequence GT.

This sequence belongs to the diaminopimelate epimerase family. As to quaternary structure, homodimer.

It localises to the cytoplasm. It carries out the reaction (2S,6S)-2,6-diaminopimelate = meso-2,6-diaminopimelate. It participates in amino-acid biosynthesis; L-lysine biosynthesis via DAP pathway; DL-2,6-diaminopimelate from LL-2,6-diaminopimelate: step 1/1. Its function is as follows. Catalyzes the stereoinversion of LL-2,6-diaminopimelate (L,L-DAP) to meso-diaminopimelate (meso-DAP), a precursor of L-lysine and an essential component of the bacterial peptidoglycan. The sequence is that of Diaminopimelate epimerase from Teredinibacter turnerae (strain ATCC 39867 / T7901).